The following is a 123-amino-acid chain: Large ribosomal subunit protein uL14 (123 aa).

It belongs to the universal ribosomal protein uL14 family. In terms of assembly, part of the 50S ribosomal subunit. Forms a cluster with proteins L3 and L19. In the 70S ribosome, L14 and L19 interact and together make contacts with the 16S rRNA in bridges B5 and B8.

In terms of biological role, binds to 23S rRNA. Forms part of two intersubunit bridges in the 70S ribosome. In Cronobacter sakazakii (strain ATCC BAA-894) (Enterobacter sakazakii), this protein is Large ribosomal subunit protein uL14.